The following is a 482-amino-acid chain: Serine carboxypeptidase-like 36 (482 aa).

The N-terminal stretch at M1–C25 is a signal peptide. Cystine bridges form between C119–C363, C275–C286, and C310–C331. Residue S210 is part of the active site. N228 is a glycosylation site (N-linked (GlcNAc...) asparagine). 2 N-linked (GlcNAc...) asparagine glycosylation sites follow: N312 and N352. The active site involves D402. N-linked (GlcNAc...) asparagine glycosylation is found at N418 and N444. The active site involves H455.

Belongs to the peptidase S10 family. In terms of tissue distribution, expressed in seedlings, flowers and siliques.

The protein localises to the secreted. Its function is as follows. Probable carboxypeptidase. The polypeptide is Serine carboxypeptidase-like 36 (SCPL36) (Arabidopsis thaliana (Mouse-ear cress)).